The chain runs to 432 residues: Meiotically up-regulated gene 134 protein (432 aa).

It belongs to the UPF0300 family.

The protein localises to the cytoplasm. Its subcellular location is the cell cortex. Has a role in meiosis. In Schizosaccharomyces pombe (strain 972 / ATCC 24843) (Fission yeast), this protein is Meiotically up-regulated gene 134 protein (mug134).